We begin with the raw amino-acid sequence, 374 residues long: AA14 family lytic polysaccharide monooxygenase B (374 aa).

The signal sequence occupies residues 1–18 (MIPVFLAAIAVFLPLTSG). Residues Asn31, Asn49, Asn94, and Asn151 are each glycosylated (N-linked (GlcNAc...) asparagine). 5 disulfide bridges follow: Cys85/Cys108, Cys127/Cys154, Cys171/Cys176, Cys178/Cys200, and Cys220/Cys236. N-linked (GlcNAc...) asparagine glycans are attached at residues Asn235 and Asn315. The disordered stretch occupies residues 306-374 (ISNATPAPSN…TQSRKMRYVF (69 aa)). Positions 313–344 (PSNGSCSSRPPSSPVSSSAASTTTSRSPRPSA) are enriched in low complexity.

Belongs to the polysaccharide monooxygenase AA14 family. The cofactor is Cu(2+).

It localises to the secreted. In terms of biological role, lytic polysaccharide monooxygenase (LPMO) that oxidatively cleaves xylan with both C1 and C4 regioselectivity and that specifically targets the protective shield made by heteroxylans that cover cellulose microfibrils in wood. Catalysis by LPMOs requires the reduction of the active-site copper from Cu(II) to Cu(I) by a reducing agent and H(2)O(2) or O(2) as a cosubstrate. Cleavage occurs only when xylans are bound to cellulose and not when they are in solution. Increases the efficiency of wood saccharification through oxidative cleavage of highly refractory xylan-coated cellulose fibers via synergistic relationship with xylan-active enzymes, xylobiohydrolases and cellobiohydrolases. This chain is AA14 family lytic polysaccharide monooxygenase B, found in Pycnoporus cinnabarinus (Cinnabar-red polypore).